A 496-amino-acid chain; its full sequence is L-arabinose isomerase (496 aa).

Residues Glu306, Glu331, His348, and His447 each contribute to the Mn(2+) site.

Belongs to the arabinose isomerase family. It depends on Mn(2+) as a cofactor.

It carries out the reaction beta-L-arabinopyranose = L-ribulose. Its pathway is carbohydrate degradation; L-arabinose degradation via L-ribulose; D-xylulose 5-phosphate from L-arabinose (bacterial route): step 1/3. In terms of biological role, catalyzes the conversion of L-arabinose to L-ribulose. The chain is L-arabinose isomerase from Geobacillus kaustophilus (strain HTA426).